A 303-amino-acid polypeptide reads, in one-letter code: ATP synthase gamma chain (303 aa).

Belongs to the ATPase gamma chain family. In terms of assembly, F-type ATPases have 2 components, CF(1) - the catalytic core - and CF(0) - the membrane proton channel. CF(1) has five subunits: alpha(3), beta(3), gamma(1), delta(1), epsilon(1). CF(0) has three main subunits: a, b and c.

It is found in the cell inner membrane. In terms of biological role, produces ATP from ADP in the presence of a proton gradient across the membrane. The gamma chain is believed to be important in regulating ATPase activity and the flow of protons through the CF(0) complex. This is ATP synthase gamma chain from Bartonella quintana (strain Toulouse) (Rochalimaea quintana).